Here is a 181-residue protein sequence, read N- to C-terminus: ADP-ribosylation factor 1 (181 aa).

A lipid anchor (N-myristoyl glycine) is attached at Gly2. Residues 24 to 31 (GLDAAGKT), 126 to 129 (NKQD), and Ala160 contribute to the GTP site.

Belongs to the small GTPase superfamily. Arf family. As to quaternary structure, may interact with GTPase RAB5b.

It is found in the golgi apparatus membrane. The catalysed reaction is GTP + H2O = GDP + phosphate + H(+). Alternates between an inactive GDP-bound form and an active GTP-bound form. Intrinsic GTPase activity is almost undetectable in vitro. Activated by a guanine nucleotide-exchange factor (GEF) and inactivated by GTPase-activating protein ARFGAP1. Small GTPase involved in protein trafficking between different compartments. Modulates vesicle budding and uncoating within the Golgi complex. In its GTP-bound form, triggers the recruitment of coatomer proteins to the Golgi membrane. The hydrolysis of ARF1-bound GTP, which is mediated by ARFGAPs proteins, is required for dissociation of coat proteins from Golgi membranes and vesicles. Regulates the transport of N-acylated AK2 to the parasitophorous vacuole membrane. May be involved in the activation of lipid kinase PIP5K. This chain is ADP-ribosylation factor 1 (ARF1), found in Plasmodium falciparum (isolate NF54).